The primary structure comprises 365 residues: GDSL esterase/lipase At3g62280 (365 aa).

A signal peptide spans 1-25 (MDYTVSSLQCFFLVLCLSLLVCSNS). Ser-43 serves as the catalytic Nucleophile. Asn-137, Asn-178, and Asn-231 each carry an N-linked (GlcNAc...) asparagine glycan. Catalysis depends on residues Asp-333 and His-336.

The protein belongs to the 'GDSL' lipolytic enzyme family.

It is found in the secreted. The polypeptide is GDSL esterase/lipase At3g62280 (Arabidopsis thaliana (Mouse-ear cress)).